The sequence spans 469 residues: Probable periplasmic serine endoprotease DegP-like (469 aa).

An N-terminal signal peptide occupies residues 1 to 25 (MKVCQKYTAVLLVWLSAVVSMRAGA). Catalysis depends on charge relay system residues His-108, Asp-138, and Ser-211. Residues 209 to 211 (GNS) and 266 to 270 (LGVLI) contribute to the substrate site. 2 PDZ domains span residues 255–346 (LKDT…VRRG) and 352–457 (AVEI…IRQG).

The protein belongs to the peptidase S1C family.

Its subcellular location is the periplasm. It carries out the reaction Acts on substrates that are at least partially unfolded. The cleavage site P1 residue is normally between a pair of hydrophobic residues, such as Val-|-Val.. Might be efficient in the degradation of transiently denatured and unfolded proteins which accumulate in the periplasm following stress conditions. The protein is Probable periplasmic serine endoprotease DegP-like (mucD) of Hahella chejuensis (strain KCTC 2396).